The primary structure comprises 149 residues: Large ribosomal subunit protein uL15 (149 aa).

The segment at 1–61 is disordered; it reads MELNSLRPAL…GGQMPLQRRL (61 aa). A compositionally biased stretch (basic residues) spans 30–39; the sequence is TATKGHKGQK.

The protein belongs to the universal ribosomal protein uL15 family. In terms of assembly, part of the 50S ribosomal subunit.

Binds to the 23S rRNA. The protein is Large ribosomal subunit protein uL15 of Trichlorobacter lovleyi (strain ATCC BAA-1151 / DSM 17278 / SZ) (Geobacter lovleyi).